The following is a 107-amino-acid chain: CRISPR-associated endoribonuclease Cas2 (107 aa).

Asp6 serves as a coordination point for Mg(2+).

It belongs to the CRISPR-associated endoribonuclease Cas2 protein family. Homodimer, forms a heterotetramer with a Cas1 homodimer. Requires Mg(2+) as cofactor.

Its function is as follows. CRISPR (clustered regularly interspaced short palindromic repeat), is an adaptive immune system that provides protection against mobile genetic elements (viruses, transposable elements and conjugative plasmids). CRISPR clusters contain sequences complementary to antecedent mobile elements and target invading nucleic acids. CRISPR clusters are transcribed and processed into CRISPR RNA (crRNA). Functions as a ssRNA-specific endoribonuclease. Involved in the integration of spacer DNA into the CRISPR cassette. This Streptococcus mutans serotype c (strain NN2025) protein is CRISPR-associated endoribonuclease Cas2.